The following is a 180-amino-acid chain: UPF0303 protein PSEEN3311 (180 aa).

The protein belongs to the UPF0303 family.

This chain is UPF0303 protein PSEEN3311, found in Pseudomonas entomophila (strain L48).